Consider the following 217-residue polypeptide: tRNA (guanine-N(7)-)-methyltransferase (217 aa).

4 residues coordinate S-adenosyl-L-methionine: Glu56, Glu81, Asp108, and Asp130. Residue Asp130 is part of the active site. Substrate contacts are provided by Lys134 and Asp166.

The protein belongs to the class I-like SAM-binding methyltransferase superfamily. TrmB family.

The enzyme catalyses guanosine(46) in tRNA + S-adenosyl-L-methionine = N(7)-methylguanosine(46) in tRNA + S-adenosyl-L-homocysteine. It participates in tRNA modification; N(7)-methylguanine-tRNA biosynthesis. Catalyzes the formation of N(7)-methylguanine at position 46 (m7G46) in tRNA. This Neorickettsia sennetsu (strain ATCC VR-367 / Miyayama) (Ehrlichia sennetsu) protein is tRNA (guanine-N(7)-)-methyltransferase.